The sequence spans 108 residues: Protein translation factor SUI1 (108 aa).

A disordered region spans residues 1 to 20 (MSIENLKSFDPFADTGDDEA).

This sequence belongs to the SUI1 family.

Its function is as follows. Additional factor that functions in concert with eIF-2 and the initiator tRNA in directing the ribosome to the proper start site of translation. This Eremothecium gossypii (strain ATCC 10895 / CBS 109.51 / FGSC 9923 / NRRL Y-1056) (Yeast) protein is Protein translation factor SUI1 (SUI1A).